Consider the following 341-residue polypeptide: Methionine import ATP-binding protein MetN 1 (341 aa).

The region spanning 2 to 241 is the ABC transporter domain; that stretch reads IEFRQVSKTF…PKTTIAQNFV (240 aa). 38–45 is a binding site for ATP; it reads GYSGAGKS.

It belongs to the ABC transporter superfamily. Methionine importer (TC 3.A.1.24) family. In terms of assembly, the complex is composed of two ATP-binding proteins (MetN), two transmembrane proteins (MetI) and a solute-binding protein (MetQ).

The protein localises to the cell membrane. It carries out the reaction L-methionine(out) + ATP + H2O = L-methionine(in) + ADP + phosphate + H(+). It catalyses the reaction D-methionine(out) + ATP + H2O = D-methionine(in) + ADP + phosphate + H(+). Functionally, part of the ABC transporter complex MetNIQ involved in methionine import. Responsible for energy coupling to the transport system. The polypeptide is Methionine import ATP-binding protein MetN 1 (Staphylococcus aureus (strain USA300)).